Consider the following 331-residue polypeptide: Probable allantoicase (331 aa).

This sequence belongs to the allantoicase family.

The catalysed reaction is allantoate + H2O = (S)-ureidoglycolate + urea. It participates in nitrogen metabolism; (S)-allantoin degradation; (S)-ureidoglycolate from allantoate (aminidohydrolase route): step 1/1. This Stutzerimonas stutzeri (strain A1501) (Pseudomonas stutzeri) protein is Probable allantoicase.